The following is a 331-amino-acid chain: uncharacterized protein (331 aa).

4 WD repeats span residues 53-92 (KAHT…KSAV), 97-139 (QQST…KLIR), 144-184 (AHND…DSTD), and 300-331 (ASEE…AFRV).

It is found in the cytoplasm. Its subcellular location is the nucleus. This is an uncharacterized protein from Schizosaccharomyces pombe (strain 972 / ATCC 24843) (Fission yeast).